The following is a 504-amino-acid chain: Maturase K (504 aa).

This sequence belongs to the intron maturase 2 family. MatK subfamily.

The protein localises to the plastid. Its subcellular location is the chloroplast. Its function is as follows. Usually encoded in the trnK tRNA gene intron. Probably assists in splicing its own and other chloroplast group II introns. The polypeptide is Maturase K (Thlaspi arvense (Field penny-cress)).